The sequence spans 1665 residues: Cortactin-binding protein 2 (1665 aa).

Residues 120–277 are a coiled coil; sequence RKMQERMSTQ…EQLKRGNDSK (158 aa). Disordered stretches follow at residues 203-222, 368-480, and 500-620; these read EKKK…RRST, VSSV…SPTS, and RFTS…PSID. Polar residues-rich tracts occupy residues 388–399 and 410–429; these read SIGSTPDLASST and TGQT…SMHS. Residues 455–469 are compositionally biased toward low complexity; the sequence is QGNANDQDQNGNTTQ. The span at 470–480 shows a compositional bias: polar residues; that stretch reads SPPSRDVSPTS. Position 500 is an asymmetric dimethylarginine (arginine 500). ANK repeat units lie at residues 711–741, 745–774, 778–807, 811–840, and 844–873; these read GRPT…DINY, DGHS…QIDA, NGFT…NIDH, GGQT…DRSV, and DGWT…PTLG. The disordered stretch occupies residues 875 to 902; it reads SLNEEEPEPGAFDLDQGQEGSEGTAKPV. The ANK 6 repeat unit spans residues 914-944; sequence EGWTAAHIAASKGFKNCLEILCRHGGLEPER. Residues 1447–1495 are disordered; sequence CSKKKGENGAWRKVSTNPRKKSGRFSSPTWSKPDLGEEGTKNKTMSQPN. At serine 1526 the chain carries Phosphoserine. The tract at residues 1575–1665 is disordered; that stretch reads NNLRMPVSQK…KNEQVQKPNK (91 aa). Composition is skewed to low complexity over residues 1590-1604 and 1623-1641; these read SSHQ…TSKT and SQCS…TRQT. Residues 1656-1665 are compositionally biased toward polar residues; it reads KNEQVQKPNK.

In terms of assembly, interacts with CTTN/cortactin SH3 domain. Interacts with STRN, STRN4/zinedin and MOB4/phocein; this interactions mediate the association with the STRIPAK core complex and may regulate dendritic spine distribution of the STRIPAK complex in hippocampal neurons. Activation of glutamate receptors weakens the interaction with STRN and STRN4.

It is found in the cytoplasm. Its subcellular location is the cell cortex. It localises to the cell projection. The protein localises to the dendritic spine. Regulates the dendritic spine distribution of CTTN/cortactin in hippocampal neurons, and thus controls dendritic spinogenesis and dendritic spine maintenance. Associates with the striatin-interacting phosphatase and kinase (STRIPAK) core complex to regulate dendritic spine distribution of the STRIPAK complex in hippocampal neurons. The polypeptide is Cortactin-binding protein 2 (CTTNBP2) (Dasypus novemcinctus (Nine-banded armadillo)).